A 54-amino-acid chain; its full sequence is Photosystem II reaction center protein L (54 aa).

The chain crosses the membrane as a helical span at residues 33-53 (SLFWGLLLIFVLAVLFSSYIF).

It belongs to the PsbL family. PSII is composed of 1 copy each of membrane proteins PsbA, PsbB, PsbC, PsbD, PsbE, PsbF, PsbH, PsbI, PsbJ, PsbK, PsbL, PsbM, PsbT, PsbX, PsbY, PsbZ, Psb30/Ycf12, at least 3 peripheral proteins of the oxygen-evolving complex and a large number of cofactors. It forms dimeric complexes.

The protein resides in the plastid. It is found in the chloroplast thylakoid membrane. One of the components of the core complex of photosystem II (PSII). PSII is a light-driven water:plastoquinone oxidoreductase that uses light energy to abstract electrons from H(2)O, generating O(2) and a proton gradient subsequently used for ATP formation. It consists of a core antenna complex that captures photons, and an electron transfer chain that converts photonic excitation into a charge separation. This subunit is found at the monomer-monomer interface and is required for correct PSII assembly and/or dimerization. The protein is Photosystem II reaction center protein L of Stigeoclonium helveticum (Green alga).